The following is a 711-amino-acid chain: Nuclear intron maturase 1, mitochondrial (711 aa).

The Reverse transcriptase domain maps to 147-459 (KDKISMNGGE…RGIQFLDHII (313 aa)). The tract at residues 484–653 (GTLLSVSASL…QVLQEYIRLQ (170 aa)) is intron maturase type-2.

This sequence belongs to the plant nuclear intron maturase (nMat) family. Expressed at low levels in seedlings and accumulates in adult plants.

It is found in the mitochondrion. Functionally, nuclear-encoded maturase required for splicing of group-II introns in mitochondria. Necessary for mitochondrial biogenesis during early developmental stages. Involved in the splicing of mitochondrial NAD4 transcripts. Required for trans-splicing of NAD1 intron 1 and also functions in cis-splicing of NAD2 intron 1 and NAD4 intron 2. Required for the regulation of fundamental metabolic pathways such as amino acid metabolism, triacylglycerol degradation and polysaccharide synthesis (cellulose and starch) during the early stage of plant growth. Implicated in stress responses. This chain is Nuclear intron maturase 1, mitochondrial, found in Arabidopsis thaliana (Mouse-ear cress).